The following is a 327-amino-acid chain: Zinc transport protein ZntB (327 aa).

Residues 1–273 (MEAIKGSDVN…ARRTYTMSLM (273 aa)) are Cytoplasmic-facing. A helical transmembrane segment spans residues 274–294 (AMVFLPSTFLTGLFGVNLGGI). The Periplasmic segment spans residues 295 to 300 (PGGGWR). A helical transmembrane segment spans residues 301 to 321 (FGFSLFCILLVVLIGGVTLWL). The Cytoplasmic portion of the chain corresponds to 322-327 (HRSKWL).

Belongs to the CorA metal ion transporter (MIT) (TC 1.A.35) family.

The protein resides in the cell inner membrane. It catalyses the reaction Zn(2+)(out) + H(+)(out) = Zn(2+)(in) + H(+)(in). Its function is as follows. Zinc transporter. Acts as a Zn(2+):proton symporter, which likely mediates zinc ion uptake. The protein is Zinc transport protein ZntB of Salmonella choleraesuis (strain SC-B67).